We begin with the raw amino-acid sequence, 1450 residues long: Collagen alpha-1(I) chain (1450 aa).

An N-terminal signal peptide occupies residues 1-22; sequence MFSFVDNRLLVLLAACVLLVRA. Positions 23–148 are cleaved as a propeptide — N-terminal propeptide; it reads LDQEDIESGL…PPGLGGNFAP (126 aa). The VWFC domain maps to 31–90; sequence GLCHQEGTTYSDKDVWKPEPCVICVCDNGNIMCDDVTCGDYPVDCPNAEIPFGECCPVCP. Residues 97 to 1201 are disordered; the sequence is YSEQTGVEGP…EPKSHGDGRY (1105 aa). Positions 106–116 are enriched in basic and acidic residues; that stretch reads PKGEVGPKGDR. Over residues 130–140 the composition is skewed to pro residues; it reads LPGPPGPPGPP. The residue at position 149 (Gln-149) is a Pyrrolidone carboxylic acid. Position 157 is an allysine (Lys-157). Residues 166–181 show a composition bias toward pro residues; the sequence is PMGPMGPRGPPGPSGS. A 4-hydroxyproline mark is found at Pro-176, Pro-182, Pro-194, Pro-197, Pro-212, Pro-227, Pro-242, and Pro-248. The segment covering 182–206 has biased composition (low complexity); sequence PGPQGFQGPSGEPGEPGAAGALGPR. Positions 215–229 are enriched in basic and acidic residues; that stretch reads NGDDGESGKPGRPGE. Lys-251 is subject to 5-hydroxylysine; alternate. O-linked (Gal...) hydroxylysine; alternate glycosylation occurs at Lys-251. The span at 266-292 shows a compositional bias: low complexity; the sequence is NGPAGPKGEPGNPGENGAPGQAGPRGL. A 4-hydroxyproline mark is found at Pro-275, Pro-278, Pro-284, Pro-293, Pro-299, Pro-314, Pro-320, Pro-329, Pro-332, Pro-359, Pro-362, Pro-374, Pro-380, Pro-389, Pro-395, Pro-398, and Pro-413. A compositionally biased stretch (pro residues) spans 317–331; the sequence is AGPPGPTGPTGPPGF. Residues 352–374 show a composition bias toward low complexity; sequence PQGARGEPGAPGPAGAAGPSGNP. Positions 378 to 387 are enriched in gly residues; it reads GQPGGKGATG. The segment covering 388–443 has biased composition (low complexity); it reads SPGIAGAPGFPGARGAPGPQGPAGAPGPKGNNGEPGAQGNKGEPGAKGEPGPAGVQ. Lys-416 is modified (5-hydroxylysine). Residues Pro-422, Pro-437, Pro-446, Pro-461, Pro-467, Pro-476, and Pro-482 each carry the 4-hydroxyproline modification. The span at 471 to 480 shows a compositional bias: gly residues; that stretch reads GERGGPGSRG. Lys-491 bears the 5-hydroxylysine mark. 4-hydroxyproline is present on residues Pro-494, Pro-515, Pro-521, Pro-530, Pro-533, Pro-551, Pro-569, Pro-578, Pro-590, Pro-608, Pro-626, Pro-632, Pro-644, Pro-650, Pro-656, and Pro-668. Low complexity-rich tracts occupy residues 568–578 and 586–596; these read FPGPKGAAGEP and VAGPPGATGAP. Residues 637 to 650 are compositionally biased toward low complexity; the sequence is PAGEAGKPGEQGAP. Positions 669–678 are enriched in gly residues; sequence GERGGQGPAG. A compositionally biased stretch (low complexity) spans 679 to 701; that stretch reads AQGPRGSPGSPGNDGAKGEAGAA. 5 positions are modified to 4-hydroxyproline: Pro-689, Pro-704, Pro-710, Pro-716, and Pro-725. Residues 702 to 711 show a composition bias toward gly residues; the sequence is GAPGGRGPPG. Lys-737 bears the 5-hydroxylysine mark. A 4-hydroxyproline mark is found at Pro-743, Pro-758, Pro-764, Pro-785, Pro-791, Pro-794, Pro-803, Pro-809, Pro-827, Pro-836, and Pro-845. The segment covering 796-806 has biased composition (low complexity); sequence PAGICGPPGAD. The span at 817–869 shows a compositional bias: low complexity; that stretch reads DAGPKGDAGAPGPAGPTGAPGPAGNVGAPGPKGTRGAAGPPGATGFPGAAGRL. Lys-848 is modified (5-hydroxylysine). 4-hydroxyproline occurs at positions 857 and 863. Position 871 is a 3-hydroxyproline (Pro-871). 4-hydroxyproline is present on residues Pro-872, Pro-881, Pro-884, Pro-908, Pro-914, Pro-923, Pro-932, Pro-950, Pro-962, Pro-968, Pro-983, Pro-989, Pro-995, Pro-1004, and Pro-1010. Over residues 917–943 the composition is skewed to low complexity; that stretch reads SGEKGSPGSDGPAGAPGIPGPQGIAGQ. Residues 982-997 are compositionally biased toward pro residues; it reads PPGPSGPPGLGGPPGE. At Lys-1019 the chain carries 5-hydroxylysine. Positions 1028 to 1043 are enriched in pro residues; it reads SGPPGAPGAPGAPGPV. A 4-hydroxyproline mark is found at Pro-1031, Pro-1034, and Pro-1037. The segment covering 1064-1078 has biased composition (low complexity); it reads AGPSGVRGAPGPAGA. Residues 1079–1093 are compositionally biased toward basic and acidic residues; the sequence is RGDKGEAGEQGERGM. 5-hydroxylysine is present on Lys-1082. Lys-1094 carries the 5-hydroxylysine; alternate modification. Lys-1094 carries O-linked (Gal...) hydroxylysine; alternate glycosylation. Pro-1106 and Pro-1109 each carry 4-hydroxyproline. Residues 1120-1129 are compositionally biased toward pro residues; the sequence is PSGPAGPRGP. Residues Pro-1130 and Pro-1145 each carry the 4-hydroxyproline modification. The span at 1130–1145 shows a compositional bias: low complexity; sequence PGSSGSTGKDGVNGLP. Pro-1150 bears the 3-hydroxyproline mark. Pro-1151 bears the 4-hydroxyproline mark. Residues 1163–1178 are compositionally biased toward pro residues; sequence AGPPGPPGPPGPPGPP. Pro-1165 carries the post-translational modification 3-hydroxyproline. Pro-1166 carries the post-translational modification 4-hydroxyproline. Pro-1168 carries the 3-hydroxyproline modification. Pro-1169 carries the 4-hydroxyproline modification. A 3-hydroxyproline modification is found at Pro-1171. 4-hydroxyproline occurs at positions 1172, 1175, and 1178. Residue Lys-1194 is modified to Allysine. A propeptide spans 1205 to 1450 (C-terminal propeptide); sequence DDANVVRDRD…GIDIGPVCFL (246 aa). Residues 1215–1450 enclose the Fibrillar collagen NC1 domain; the sequence is LEVDTTLKSL…GIDIGPVCFL (236 aa). Intrachain disulfides connect Cys-1245–Cys-1277, Cys-1285–Cys-1448, and Cys-1356–Cys-1401. Residues Asp-1263, Asn-1265, Gln-1266, Cys-1268, and Asp-1271 each coordinate Ca(2+). Asn-1351 carries an N-linked (GlcNAc...) asparagine glycan.

This sequence belongs to the fibrillar collagen family. Trimers of one alpha 2(I) and two alpha 1(I) chains. In terms of processing, contains mostly 4-hydroxyproline. Proline residues at the third position of the tripeptide repeating unit (G-X-Y) are hydroxylated in some or all of the chains. Post-translationally, contains 3-hydroxyproline at a few sites. This modification occurs on the first proline residue in the sequence motif Gly-Pro-Hyp, where Hyp is 4-hydroxyproline. Lysine residues at the third position of the tripeptide repeating unit (G-X-Y) are 5-hydroxylated in some or all of the chains. In terms of processing, O-glycosylated on hydroxylated lysine residues. The O-linked glycan consists of a Glc-Gal disaccharide.

Its subcellular location is the secreted. The protein resides in the extracellular space. The protein localises to the extracellular matrix. Type I collagen is a member of group I collagen (fibrillar forming collagen). The polypeptide is Collagen alpha-1(I) chain (COL1A1) (Cynops pyrrhogaster (Japanese fire-bellied newt)).